The primary structure comprises 414 residues: CinA-like protein (414 aa).

It belongs to the CinA family.

The sequence is that of CinA-like protein from Akkermansia muciniphila (strain ATCC BAA-835 / DSM 22959 / JCM 33894 / BCRC 81048 / CCUG 64013 / CIP 107961 / Muc).